The chain runs to 1680 residues: SWI/SNF chromatin-remodeling complex subunit snf22 (1680 aa).

Disordered stretches follow at residues 61-135, 203-258, 274-300, and 367-427; these read QQMR…SQAS, NNSF…HSFS, RRGSIPVNPSTFSASSPPSGSMLASPY, and YVYR…VPPT. Over residues 62–91 the composition is skewed to polar residues; it reads QMRNQSSEFPDAENTNLRKQQDTLPTTGFN. 2 stretches are compositionally biased toward low complexity: residues 118–127 and 222–233; these read GNGNVGLNNP and SSLPHSFASPSS. The segment covering 234 to 245 has biased composition (polar residues); sequence TFEQPHTVQSRA. Composition is skewed to low complexity over residues 247 to 258, 282 to 299, and 374 to 392; these read SVDTTSSSHSFS, PSTFSASSPPSGSMLASP, and PPSATSFQPSSSRSPSVDP. Over residues 406 to 419 the composition is skewed to polar residues; that stretch reads PSPSASALKTQSHV. In terms of domain architecture, QLQ spans 429–465; it reads KLNHAQLAMLKSQIVAYNCLNSPNGQVPPAVQQAIFG. A compositionally biased stretch (polar residues) spans 477 to 489; it reads SMPFQQNVPQMSS. Positions 477–499 are disordered; sequence SMPFQQNVPQMSSVKKDTPTRDA. Over residues 490–499 the composition is skewed to basic and acidic residues; the sequence is VKKDTPTRDA. Residues 704–776 enclose the HSA domain; it reads QKTEHAMRQK…ARQRLQALRA (73 aa). The span at 817–832 shows a compositional bias: polar residues; the sequence is SNIHSGNTSGKGSNSA. Residues 817-836 are disordered; the sequence is SNIHSGNTSGKGSNSAELEA. A Helicase ATP-binding domain is found at 881 to 1046; it reads LSLYNNNLNG…WALLNFVLPK (166 aa). 894–901 contacts ATP; it reads DEMGLGKT. The DEGH box motif lies at 996–999; the sequence is DEGH. In terms of domain architecture, Helicase C-terminal spans 1191-1354; it reads LLDRILPKLF…STPEEREAFL (164 aa). A disordered region spans residues 1466–1511; it reads TVDDPSSTLMPRKRGRPRKKTNSGSSLSTPLSQESSLARSGRKNTP. The span at 1476–1486 shows a compositional bias: basic residues; it reads PRKRGRPRKKT. The span at 1488–1502 shows a compositional bias: low complexity; it reads SGSSLSTPLSQESSL. The 111-residue stretch at 1513-1623 folds into the Bromo domain; it reads YKQKALRRYC…KTLKEVIEDL (111 aa).

This sequence belongs to the SNF2/RAD54 helicase family. In terms of assembly, component of the SWI/SNF global transcription activator complex composed of at least arp9, arp42, snf5, snf22, snf30, sbf59, sol1, ssr1, ssr2, ssr3, ssr4 and tfg3.

It is found in the nucleus. In terms of biological role, helicase. Component of the SWI/SNF complex, an ATP-dependent chromatin remodeling complex, required for the positive and negative regulation of gene expression of a large number of genes. It changes chromatin structure by altering DNA-histone contacts within a nucleosome, leading eventually to a change in nucleosome position, thus facilitating or repressing binding of gene-specific transcription factors. This chain is SWI/SNF chromatin-remodeling complex subunit snf22 (snf22), found in Schizosaccharomyces pombe (strain 972 / ATCC 24843) (Fission yeast).